A 193-amino-acid chain; its full sequence is Peptidyl-tRNA hydrolase (193 aa).

Position 17 (tyrosine 17) interacts with tRNA. The active-site Proton acceptor is the histidine 22. TRNA is bound by residues tyrosine 68, asparagine 70, and asparagine 116.

It belongs to the PTH family. Monomer.

It localises to the cytoplasm. It catalyses the reaction an N-acyl-L-alpha-aminoacyl-tRNA + H2O = an N-acyl-L-amino acid + a tRNA + H(+). Functionally, hydrolyzes ribosome-free peptidyl-tRNAs (with 1 or more amino acids incorporated), which drop off the ribosome during protein synthesis, or as a result of ribosome stalling. Catalyzes the release of premature peptidyl moieties from peptidyl-tRNA molecules trapped in stalled 50S ribosomal subunits, and thus maintains levels of free tRNAs and 50S ribosomes. This Acinetobacter baumannii (strain AB0057) protein is Peptidyl-tRNA hydrolase.